We begin with the raw amino-acid sequence, 715 residues long: ATP-dependent DNA helicase Hel308 (715 aa).

ATP contacts are provided by residues Q35 and 53–60 (SPTGSGKT). In terms of domain architecture, Helicase ATP-binding spans 40 to 203 (KKGLLDGNRL…WLGAEPVATN (164 aa)). A DEAH box motif is present at residues 152–155 (DELH). A Helicase C-terminal domain is found at 236–442 (HGDDAIIAYT…ERAFYTFLLG (207 aa)).

Belongs to the helicase family. Hel308 subfamily. Monomer. Interacts with PINA ATPase which decreases both DNA helicase activities of this protein.

It catalyses the reaction Couples ATP hydrolysis with the unwinding of duplex DNA by translocating in the 3'-5' direction.. The enzyme catalyses ATP + H2O = ADP + phosphate + H(+). It carries out the reaction Couples ATP hydrolysis with the unwinding of duplex DNA at the replication fork by translocating in the 5'-3' direction. This creates two antiparallel DNA single strands (ssDNA). The leading ssDNA polymer is the template for DNA polymerase III holoenzyme which synthesizes a continuous strand.. PINA inhibits the (weak) 5'-3' but not the 3'-5' helicase activity of this protein on overhang substrates. Its function is as follows. DNA-dependent ATPase and 3'-5' DNA helicase that may be involved in repair of stalled replication forks. Functionally, has predominantly 3'-5' helicase activity but also a weak 5'-3' helicase activity. Has the ability to unwind replication forks, preferentially removing the lagging strand. Hjc, Hjm (Hel308) and branch migration ATPase PINA coordinate HJ migration and cleavage of replication forks in a coordinated way. The chain is ATP-dependent DNA helicase Hel308 from Saccharolobus islandicus (strain REY15A) (Sulfolobus islandicus).